The chain runs to 104 residues: Co-chaperonin GroES 2 (104 aa).

It belongs to the GroES chaperonin family. Heptamer of 7 subunits arranged in a ring. Interacts with the chaperonin GroEL.

The protein localises to the cytoplasm. Its function is as follows. Together with the chaperonin GroEL, plays an essential role in assisting protein folding. The GroEL-GroES system forms a nano-cage that allows encapsulation of the non-native substrate proteins and provides a physical environment optimized to promote and accelerate protein folding. GroES binds to the apical surface of the GroEL ring, thereby capping the opening of the GroEL channel. This chain is Co-chaperonin GroES 2, found in Mesorhizobium japonicum (strain LMG 29417 / CECT 9101 / MAFF 303099) (Mesorhizobium loti (strain MAFF 303099)).